Here is a 177-residue protein sequence, read N- to C-terminus: uncharacterized protein (177 aa).

This is an uncharacterized protein from Acanthamoeba polyphaga mimivirus (APMV).